Consider the following 951-residue polypeptide: WD repeat-containing and planar cell polarity effector protein fritz (951 aa).

WD repeat units lie at residues 304 to 343 (PMGA…TKYA) and 345 to 384 (QIEI…IGHQ). 3 stretches are compositionally biased toward polar residues: residues 709 to 720 (TLKSNSSLQQAP), 757 to 771 (IPDQ…STMP), and 818 to 828 (SILSNPANPAP). Disordered stretches follow at residues 709 to 776 (TLKS…SPPP), 816 to 883 (TASI…AARH), and 903 to 951 (EYLK…FGVV). Residues 930–942 (SSKGGNSSSSSSS) show a composition bias toward low complexity.

Belongs to the WD repeat fritz family.

The protein localises to the cell membrane. It is found in the cytoplasm. It localises to the cytoskeleton. Its subcellular location is the cilium axoneme. Functionally, probable effector of the planar cell polarity signaling pathway which regulates the septin cytoskeleton in both ciliogenesis and collective cell movements. Functions cell autonomously to regulate wing cell hair polarity and number. The polypeptide is WD repeat-containing and planar cell polarity effector protein fritz (frtz) (Drosophila melanogaster (Fruit fly)).